The primary structure comprises 2850 residues: Mucin-6 (2850 aa).

The signal sequence occupies residues M1–A22. The VWFD 1 domain maps to G43–A256. Cystine bridges form between C45–C218 and C67–C255. N94 carries an N-linked (GlcNAc...) asparagine glycan. The interval H160–S183 is disordered. A glycan (N-linked (GlcNAc...) asparagine) is linked at N310. The region spanning C344–C399 is the TIL 1 domain. In terms of domain architecture, VWFD 2 spans G437–S621. Intrachain disulfides connect C439–C575 and C461–C620. 2 N-linked (GlcNAc...) asparagine glycosylation sites follow: N528 and N701. The 64-residue stretch at C806 to C869 folds into the TIL 2 domain. The VWFD 3 domain maps to S908 to G1080. 4 disulfides stabilise this stretch: C910–C1044, C932–C1079, C941–C1041, and C959–C966. N1017 and N1221 each carry an N-linked (GlcNAc...) asparagine glycan. Over residues E1263 to G1281 the composition is skewed to low complexity. Disordered stretches follow at residues E1263–L1363, G1377–V1400, V1466–T1504, T1580–H1600, I1626–V1650, T1705–T1813, Q1877–H1942, I1968–V1992, T2049–T2119, Q2219–S2254, I2276–T2295, E2306–D2338, T2370–P2473, P2511–S2621, P2634–T2674, and S2692–S2761. Residues E1294 to Y1312 show a composition bias toward polar residues. Residues T1345–L1363 are compositionally biased toward low complexity. 2 stretches are compositionally biased toward polar residues: residues M1378–R1399 and V1466–H1484. A run of 8 repeats spans residues T1440 to E1555, G1556 to D1712, R1713 to D1885, R1886 to D2054, R2055 to D2227, R2228 to E2396, R2397 to T2563, and R2564 to K2671. The approximate repeats stretch occupies residues T1440 to K2671. The span at T1485–T1504 shows a compositional bias: low complexity. Positions I1626–A1639 are enriched in polar residues. Residues T1705–S1719 show a composition bias toward low complexity. Positions A1720–H1757 are enriched in polar residues. A compositionally biased stretch (low complexity) spans T1758–T1777. Positions V1778–T1813 are enriched in polar residues. Residues S1893 to H1942 are compositionally biased toward low complexity. Over residues I1968–A1981 the composition is skewed to polar residues. Positions T2049–S2061 are enriched in low complexity. Over residues A2062–H2099 the composition is skewed to polar residues. Residues T2100–T2119 are compositionally biased toward low complexity. The span at D2227 to S2238 shows a compositional bias: polar residues. Over residues T2282–T2295 the composition is skewed to low complexity. A compositionally biased stretch (low complexity) spans T2370–S2384. The span at A2385–V2429 shows a compositional bias: polar residues. Over residues H2436–T2456 the composition is skewed to low complexity. Residues A2457–S2466 show a composition bias toward polar residues. Low complexity predominate over residues S2516–T2533. The segment covering I2534–F2560 has biased composition (polar residues). Over residues P2561–S2584 the composition is skewed to low complexity. Over residues R2585–H2601 the composition is skewed to polar residues. A compositionally biased stretch (low complexity) spans T2639–T2674. Polar residues predominate over residues S2692–L2725. A compositionally biased stretch (low complexity) spans S2726–T2759. 4 disulfides stabilise this stretch: C2760/C2807, C2774/C2821, C2783/C2841, and C2787/C2843. A CTCK domain is found at C2760–K2849.

In terms of assembly, multimer; disulfide-linked. O-glycosylated. Expressed in stomach, duodenum and small intestine.

It is found in the secreted. In terms of biological role, may provide a mechanism for modulation of the composition of the protective mucus layer related to acid secretion or the presence of bacteria and noxious agents in the lumen. Plays an important role in the cytoprotection of epithelial surfaces and are used as tumor markers in a variety of cancers. May play a role in epithelial organogenesis. This chain is Mucin-6 (Muc6), found in Mus musculus (Mouse).